Consider the following 339-residue polypeptide: MSYSWKVRALCCAGLCVGAGLRAQEGSGIRVRGMPEHAQVTVNGYLCATPEEMVLTPGECEVTVCAFGYTKKTLQVVVEEGSFTVVDGRLDTARLELTDVTAQRAHFNPRDPAGLNTEYVTFRVTKSAKCTVTVKDAEGKXXCEEPVELVELGLNVGGIFGGSNKNSEDVSVSAKVAFEGNVTSDPAMGQLYASALCLYRIVHNNDSSGANKCFMRKGLTFATTCAYGIKGFTVALSGELGASSETGIKKPDFSTDVGLSLKYQNKICSIATYSKCGTTTGSNSDGANSVAGVSVLRAACKSRDGLGEQLRLQRYSYEGWELRASIGYVINTKLRVGRP.

This is an uncharacterized protein from Treponema pallidum (strain Nichols).